Consider the following 133-residue polypeptide: Ribonuclease VapC28 (133 aa).

Residues 1 to 124 (MIVDTSAIIA…LWKGNDFGHT (124 aa)) form the PINc domain. 2 residues coordinate Mg(2+): Asp4 and Asp100.

Belongs to the PINc/VapC protein family. Mg(2+) serves as cofactor.

In terms of biological role, toxic component of a type II toxin-antitoxin (TA) system. An RNase. Upon expression in M.smegmatis inhibits colony formation. Its toxic effect is neutralized by coexpression with cognate antitoxin VapB28. The polypeptide is Ribonuclease VapC28 (Mycobacterium tuberculosis (strain ATCC 25618 / H37Rv)).